Here is a 251-residue protein sequence, read N- to C-terminus: PF03932 family protein CutC (251 aa).

It belongs to the CutC family.

It localises to the cytoplasm. This chain is PF03932 family protein CutC, found in Bacteroides fragilis (strain ATCC 25285 / DSM 2151 / CCUG 4856 / JCM 11019 / LMG 10263 / NCTC 9343 / Onslow / VPI 2553 / EN-2).